The chain runs to 349 residues: UDP-N-acetylenolpyruvoylglucosamine reductase (349 aa).

The FAD-binding PCMH-type domain occupies Gly25–Gln197. Arg173 is an active-site residue. Ser249 functions as the Proton donor in the catalytic mechanism. Glu345 is a catalytic residue.

Belongs to the MurB family. The cofactor is FAD.

The protein localises to the cytoplasm. The catalysed reaction is UDP-N-acetyl-alpha-D-muramate + NADP(+) = UDP-N-acetyl-3-O-(1-carboxyvinyl)-alpha-D-glucosamine + NADPH + H(+). Its pathway is cell wall biogenesis; peptidoglycan biosynthesis. Functionally, cell wall formation. The protein is UDP-N-acetylenolpyruvoylglucosamine reductase of Burkholderia orbicola (strain MC0-3).